The sequence spans 1294 residues: von Willebrand factor A domain-containing protein 3B (1294 aa).

Residues 508–684 (CIYILIDTSH…EDLTLLVKEM (177 aa)) enclose the VWFA domain. Disordered regions lie at residues 732–754 (CAKP…KGPW), 778–803 (RSQM…SSRR), 1012–1036 (APGE…DPLK), and 1193–1247 (DTQD…PRTA). Over residues 738 to 748 (DVDSTQTSSLN) the composition is skewed to polar residues. The segment covering 778-787 (RSQMSSLRSS) has biased composition (low complexity). The span at 1193–1202 (DTQDSREPRR) shows a compositional bias: basic and acidic residues. Residues 1203-1212 (EKPRRKKRPA) are compositionally biased toward basic residues. The segment covering 1213-1236 (KQPLQQAAPSDSDGSSHGISSHGS) has biased composition (low complexity).

It localises to the cytoplasm. The chain is von Willebrand factor A domain-containing protein 3B (VWA3B) from Homo sapiens (Human).